The following is a 149-amino-acid chain: Evolved beta-galactosidase subunit beta (149 aa).

In terms of assembly, heterooctamer of 4 alpha and 4 beta subunits.

Functionally, required for full activity of the EbgA enzyme. Exact function not known. In Escherichia coli O6:H1 (strain CFT073 / ATCC 700928 / UPEC), this protein is Evolved beta-galactosidase subunit beta (ebgC).